The primary structure comprises 350 residues: Neuronal-specific septin-3 (350 aa).

A compositionally biased stretch (basic and acidic residues) spans 1 to 10; the sequence is MSKGLPEART. A disordered region spans residues 1–29; it reads MSKGLPEARTDAAMSELVPEPRPKPAVPM. In terms of domain architecture, Septin-type G spans 58–331; sequence TGFDFNIMVV…ETYRAKRLND (274 aa). Residues 68–75 form a G1 motif region; it reads GQSGLGKS. Position 68–75 (68–75) interacts with GTP; it reads GQSGLGKS. Position 91 is a phosphoserine (S91). Residue T102 coordinates GTP. Residues 125 to 128 are G3 motif; the sequence is DTPG. The segment at 207 to 210 is G4 motif; sequence AKAD. Residues 208–216, G265, and R280 contribute to the GTP site; that span reads KADTMTLEE. The segment at 328-350 is disordered; the sequence is RLNDNGGLPPVSVDTEESHDSNP.

The protein belongs to the TRAFAC class TrmE-Era-EngA-EngB-Septin-like GTPase superfamily. Septin GTPase family. In terms of assembly, septins polymerize into heterooligomeric protein complexes that form filaments, and can associate with cellular membranes, actin filaments and microtubules. GTPase activity is required for filament formation. In terms of processing, phosphorylated by PKG on serine residues. Phosphorylated by PKG on Ser-91. Expressed in the brain including the cerebrum, hippocampus and cerebellum (at protein level).

It is found in the cytoplasm. Its subcellular location is the cytoskeleton. It localises to the synapse. Its function is as follows. Filament-forming cytoskeletal GTPase. May play a role in cytokinesis (Potential). The sequence is that of Neuronal-specific septin-3 from Mus musculus (Mouse).